The sequence spans 842 residues: Alanine--tRNA ligase (842 aa).

Zn(2+)-binding residues include His549, His553, Cys650, and His654.

The protein belongs to the class-II aminoacyl-tRNA synthetase family. It depends on Zn(2+) as a cofactor.

It is found in the cytoplasm. It catalyses the reaction tRNA(Ala) + L-alanine + ATP = L-alanyl-tRNA(Ala) + AMP + diphosphate. Catalyzes the attachment of alanine to tRNA(Ala) in a two-step reaction: alanine is first activated by ATP to form Ala-AMP and then transferred to the acceptor end of tRNA(Ala). Also edits incorrectly charged Ser-tRNA(Ala) and Gly-tRNA(Ala) via its editing domain. This chain is Alanine--tRNA ligase, found in Campylobacter jejuni subsp. jejuni serotype O:6 (strain 81116 / NCTC 11828).